The sequence spans 208 residues: Ribosome maturation factor RimP (208 aa).

Residues 175–208 are disordered; that stretch reads GEDVEDLVADPGADDELDELDELDELDDGDEDEQ. Positions 177–208 are enriched in acidic residues; it reads DVEDLVADPGADDELDELDELDELDDGDEDEQ.

The protein belongs to the RimP family.

Its subcellular location is the cytoplasm. Functionally, required for maturation of 30S ribosomal subunits. The polypeptide is Ribosome maturation factor RimP (Kineococcus radiotolerans (strain ATCC BAA-149 / DSM 14245 / SRS30216)).